The chain runs to 288 residues: uncharacterized protein (288 aa).

Residues Leu-92–Ile-112 form a helical membrane-spanning segment. A disordered region spans residues Asp-121–Ala-183. 2 stretches are compositionally biased toward basic and acidic residues: residues Ser-136–Leu-146 and Ser-154–Ile-181. Residues Lys-147 to Gly-185 adopt a coiled-coil conformation.

It is found in the cell membrane. This is an uncharacterized protein from Bacillus subtilis (strain 168).